The primary structure comprises 268 residues: MKISIVIVTYNRIPALCELLESISRQTLMPYEIIIVNDAGESVVPVKALYPELPIAVINLEKNSGHVAARNAGVKEASGDCIMLCDDDDFFTPGHIEKMAKEIETADFVHSDAEIVSFEEKNGTRYPVSRKLFAYTADYEDMRVFSTYVPSGSMYRRFLHDEIGYFDADVHNYWDWDFYLRAAKDYRVKRVPCASVIYAFSDAGDNQSADLGAKRKQYLDRLSEKHGLGELPTKNFAVLLEEPEMKRREAKSEMVWDGEPVYSRLHRS.

Belongs to the glycosyltransferase 2 family.

This is an uncharacterized protein from Bacillus subtilis (strain 168).